The sequence spans 198 residues: Recombination protein RecR (198 aa).

The segment at 57–72 (CSICGNITEEDPCEIC) adopts a C4-type zinc-finger fold. Residues 80 to 175 (SIILVVEEPK…TVTRLAHGLS (96 aa)) form the Toprim domain.

The protein belongs to the RecR family.

May play a role in DNA repair. It seems to be involved in an RecBC-independent recombinational process of DNA repair. It may act with RecF and RecO. The polypeptide is Recombination protein RecR (Enterococcus faecalis (strain ATCC 700802 / V583)).